The following is a 376-amino-acid chain: Succinyl-diaminopimelate desuccinylase (376 aa).

Residue His-67 coordinates Zn(2+). Asp-69 is an active-site residue. Position 100 (Asp-100) interacts with Zn(2+). Glu-134 functions as the Proton acceptor in the catalytic mechanism. Glu-135, Glu-163, and His-349 together coordinate Zn(2+).

This sequence belongs to the peptidase M20A family. DapE subfamily. In terms of assembly, homodimer. Zn(2+) serves as cofactor. It depends on Co(2+) as a cofactor.

The catalysed reaction is N-succinyl-(2S,6S)-2,6-diaminopimelate + H2O = (2S,6S)-2,6-diaminopimelate + succinate. It participates in amino-acid biosynthesis; L-lysine biosynthesis via DAP pathway; LL-2,6-diaminopimelate from (S)-tetrahydrodipicolinate (succinylase route): step 3/3. Its function is as follows. Catalyzes the hydrolysis of N-succinyl-L,L-diaminopimelic acid (SDAP), forming succinate and LL-2,6-diaminopimelate (DAP), an intermediate involved in the bacterial biosynthesis of lysine and meso-diaminopimelic acid, an essential component of bacterial cell walls. This Xanthomonas campestris pv. campestris (strain B100) protein is Succinyl-diaminopimelate desuccinylase.